A 436-amino-acid chain; its full sequence is UDP-N-acetylmuramate--L-alanine ligase (436 aa).

ATP is bound at residue 108 to 114; sequence GAHGKTS.

The protein belongs to the MurCDEF family.

The protein resides in the cytoplasm. It carries out the reaction UDP-N-acetyl-alpha-D-muramate + L-alanine + ATP = UDP-N-acetyl-alpha-D-muramoyl-L-alanine + ADP + phosphate + H(+). It participates in cell wall biogenesis; peptidoglycan biosynthesis. In terms of biological role, cell wall formation. The polypeptide is UDP-N-acetylmuramate--L-alanine ligase (Bacillus cereus (strain Q1)).